Here is a 366-residue protein sequence, read N- to C-terminus: Alanine racemase (366 aa).

Residue Lys33 is the Proton acceptor; specific for D-alanine of the active site. Residue Lys33 is modified to N6-(pyridoxal phosphate)lysine. Residue Arg129 coordinates substrate. Catalysis depends on Tyr253, which acts as the Proton acceptor; specific for L-alanine. Met301 serves as a coordination point for substrate.

The protein belongs to the alanine racemase family. Pyridoxal 5'-phosphate is required as a cofactor.

The catalysed reaction is L-alanine = D-alanine. It functions in the pathway amino-acid biosynthesis; D-alanine biosynthesis; D-alanine from L-alanine: step 1/1. Its function is as follows. Catalyzes the interconversion of L-alanine and D-alanine. May also act on other amino acids. The sequence is that of Alanine racemase (alr) from Xanthomonas oryzae pv. oryzae (strain KACC10331 / KXO85).